The sequence spans 258 residues: Imidazole glycerol phosphate synthase subunit HisF (258 aa).

Residues Asp-11 and Asp-130 contribute to the active site.

The protein belongs to the HisA/HisF family. As to quaternary structure, heterodimer of HisH and HisF.

The protein resides in the cytoplasm. It catalyses the reaction 5-[(5-phospho-1-deoxy-D-ribulos-1-ylimino)methylamino]-1-(5-phospho-beta-D-ribosyl)imidazole-4-carboxamide + L-glutamine = D-erythro-1-(imidazol-4-yl)glycerol 3-phosphate + 5-amino-1-(5-phospho-beta-D-ribosyl)imidazole-4-carboxamide + L-glutamate + H(+). It participates in amino-acid biosynthesis; L-histidine biosynthesis; L-histidine from 5-phospho-alpha-D-ribose 1-diphosphate: step 5/9. Functionally, IGPS catalyzes the conversion of PRFAR and glutamine to IGP, AICAR and glutamate. The HisF subunit catalyzes the cyclization activity that produces IGP and AICAR from PRFAR using the ammonia provided by the HisH subunit. The protein is Imidazole glycerol phosphate synthase subunit HisF of Buchnera aphidicola subsp. Baizongia pistaciae (strain Bp).